Reading from the N-terminus, the 219-residue chain is ATP-dependent dethiobiotin synthetase BioD (219 aa).

Position 14–19 (14–19) interacts with ATP; it reads DVGKTY. T18 provides a ligand contact to Mg(2+). K37 is an active-site residue. S41 lines the substrate pocket. ATP contacts are provided by residues D54, 114–117, and 175–176; these read EGAG and NN. Residues D54 and E114 each coordinate Mg(2+).

The protein belongs to the dethiobiotin synthetase family. In terms of assembly, homodimer. The cofactor is Mg(2+).

The protein resides in the cytoplasm. The enzyme catalyses (7R,8S)-7,8-diammoniononanoate + CO2 + ATP = (4R,5S)-dethiobiotin + ADP + phosphate + 3 H(+). It participates in cofactor biosynthesis; biotin biosynthesis; biotin from 7,8-diaminononanoate: step 1/2. Catalyzes a mechanistically unusual reaction, the ATP-dependent insertion of CO2 between the N7 and N8 nitrogen atoms of 7,8-diaminopelargonic acid (DAPA, also called 7,8-diammoniononanoate) to form a ureido ring. This chain is ATP-dependent dethiobiotin synthetase BioD, found in Fusobacterium nucleatum subsp. nucleatum (strain ATCC 25586 / DSM 15643 / BCRC 10681 / CIP 101130 / JCM 8532 / KCTC 2640 / LMG 13131 / VPI 4355).